Here is a 402-residue protein sequence, read N- to C-terminus: NADH-quinone oxidoreductase subunit D (402 aa).

This sequence belongs to the complex I 49 kDa subunit family. NDH-1 is composed of 14 different subunits. Subunits NuoB, C, D, E, F, and G constitute the peripheral sector of the complex.

It is found in the cell inner membrane. It catalyses the reaction a quinone + NADH + 5 H(+)(in) = a quinol + NAD(+) + 4 H(+)(out). Its function is as follows. NDH-1 shuttles electrons from NADH, via FMN and iron-sulfur (Fe-S) centers, to quinones in the respiratory chain. The immediate electron acceptor for the enzyme in this species is believed to be ubiquinone. Couples the redox reaction to proton translocation (for every two electrons transferred, four hydrogen ions are translocated across the cytoplasmic membrane), and thus conserves the redox energy in a proton gradient. The protein is NADH-quinone oxidoreductase subunit D of Xanthobacter autotrophicus (strain ATCC BAA-1158 / Py2).